Here is a 558-residue protein sequence, read N- to C-terminus: Glucose-6-phosphate isomerase (558 aa).

Glu362 acts as the Proton donor in catalysis. Catalysis depends on residues His393 and Lys523.

This sequence belongs to the GPI family.

The protein localises to the cytoplasm. It carries out the reaction alpha-D-glucose 6-phosphate = beta-D-fructose 6-phosphate. Its pathway is carbohydrate degradation; glycolysis; D-glyceraldehyde 3-phosphate and glycerone phosphate from D-glucose: step 2/4. This is Glucose-6-phosphate isomerase (Pgi) from Drosophila melanogaster (Fruit fly).